A 62-amino-acid chain; its full sequence is Large ribosomal subunit protein bL35 (62 aa).

The segment at 25-62 (EQAYRSHLSQNKTTKQKRQARKSVQMHSSDVKRFKALI) is disordered. Residues 53-62 (SDVKRFKALI) show a composition bias toward basic and acidic residues.

The protein belongs to the bacterial ribosomal protein bL35 family.

This is Large ribosomal subunit protein bL35 from Mycoplasmopsis fermentans (Mycoplasma fermentans).